A 285-amino-acid polypeptide reads, in one-letter code: N(G),N(G)-dimethylarginine dimethylaminohydrolase 1 (285 aa).

N-acetylalanine is present on Ala2. Substrate is bound at residue Leu30. A Phosphoserine modification is found at Ser33. Substrate contacts are provided by Asp73, Glu78, Asp79, Arg98, and Arg145. The Proton donor role is filled by His173. At Cys222 the chain carries S-nitrosocysteine. Val268 contributes to the substrate binding site. Cys274 carries the S-nitrosocysteine modification. Cys274 functions as the Nucleophile in the catalytic mechanism. Cys274 lines the Zn(2+) pocket.

Belongs to the DDAH family. In terms of assembly, monomer. As to expression, detected in skeletal muscle, lung, heart, liver, kidney and brain (at protein level).

It carries out the reaction N(omega),N(omega)-dimethyl-L-arginine + H2O = dimethylamine + L-citrulline. It catalyses the reaction N(omega)-methyl-L-arginine + H2O = L-citrulline + methylamine. Inhibited by zinc ions. In terms of biological role, hydrolyzes N(G),N(G)-dimethyl-L-arginine (ADMA) and N(G)-monomethyl-L-arginine (MMA) which act as inhibitors of NOS. Has therefore a role in the regulation of nitric oxide generation. This is N(G),N(G)-dimethylarginine dimethylaminohydrolase 1 (Ddah1) from Mus musculus (Mouse).